A 213-amino-acid polypeptide reads, in one-letter code: 5-oxoprolinase subunit B (213 aa).

The protein belongs to the PxpB family. Forms a complex composed of PxpA, PxpB and PxpC.

The catalysed reaction is 5-oxo-L-proline + ATP + 2 H2O = L-glutamate + ADP + phosphate + H(+). Functionally, catalyzes the cleavage of 5-oxoproline to form L-glutamate coupled to the hydrolysis of ATP to ADP and inorganic phosphate. This is 5-oxoprolinase subunit B from Haemophilus influenzae (strain ATCC 51907 / DSM 11121 / KW20 / Rd).